Reading from the N-terminus, the 149-residue chain is Arginine repressor (149 aa).

The protein belongs to the ArgR family.

It localises to the cytoplasm. Its pathway is amino-acid biosynthesis; L-arginine biosynthesis [regulation]. Regulates arginine biosynthesis genes. The chain is Arginine repressor from Exiguobacterium sibiricum (strain DSM 17290 / CCUG 55495 / CIP 109462 / JCM 13490 / 255-15).